A 322-amino-acid polypeptide reads, in one-letter code: Corticotropin-releasing factor-binding protein (322 aa).

The first 24 residues, 1 to 24 (MSPNFKLQCHFILIFLTALRGESR), serve as a signal peptide directing secretion. Cystine bridges form between Cys60–Cys81, Cys104–Cys141, Cys183–Cys205, Cys237–Cys264, and Cys277–Cys318. A glycan (N-linked (GlcNAc...) asparagine) is linked at Asn204.

Belongs to the CRF-binding protein family.

Its subcellular location is the secreted. Functionally, binds CRF and inactivates it. May prevent inappropriate pituitary-adrenal stimulation in pregnancy. The protein is Corticotropin-releasing factor-binding protein (CRHBP) of Homo sapiens (Human).